The primary structure comprises 539 residues: MAAKDVKFGNDARVKMLRGVNVLADAVKVTLGPKGRNVVLDKSFGAPTITKDGVSVAREIELEDKFENMGAQMVKEVASKANDAAGDGTTTATVLAQAIITEGLKAVAAGMNPMDLKRGIDKAVTAAVEELKALSVPCSDSKAIAQVGTISANSDETVGKLIAEAMDKVGKEGVITVEDGTGLEDELDVVEGMQFDRGYLSPYFINKPETGAVELESPFILLADKKISNIREMLPVLEAVAKAGKPLVIIAEDVEGEALATLVVNTMRGIVKVAAVKAPGFGDRRKAMLQDIATLTGGTVISEEIGMELEKATLEDLGQAKRVVINKDTTTIIDGVGEEAAIQGRVGQIRKQIEEATSDYDREKLQERVAKLAGGVAVIKVGAATEVEMKEKKARVDDALHATRAAVEEGVVAGGGVALVRVAAKLAGLTAQNEDQNVGIKVALRAMEAPLRQIVSNAGEEPSVVTNNVKAGEGNYGYNAATEEYGNMIDFGILDPTKVTRSALQYAASVAGLMITTECMVTDLPKGDAPDLXAAGMGG.

ATP-binding positions include 30–33 (TLGP), Lys-51, 87–91 (DGTTT), Gly-415, 479–481 (NAA), and Asp-495.

This sequence belongs to the chaperonin (HSP60) family. Forms a cylinder of 14 subunits composed of two heptameric rings stacked back-to-back. Interacts with the co-chaperonin GroES.

It is found in the cytoplasm. It carries out the reaction ATP + H2O + a folded polypeptide = ADP + phosphate + an unfolded polypeptide.. Together with its co-chaperonin GroES, plays an essential role in assisting protein folding. The GroEL-GroES system forms a nano-cage that allows encapsulation of the non-native substrate proteins and provides a physical environment optimized to promote and accelerate protein folding. In Enterobacter asburiae, this protein is Chaperonin GroEL.